A 164-amino-acid polypeptide reads, in one-letter code: SsrA-binding protein (164 aa).

Residues 141 to 164 are disordered; it reads KLHDKRQDEKQKSIKREINSALKR. Over residues 145 to 158 the composition is skewed to basic and acidic residues; that stretch reads KRQDEKQKSIKREI.

It belongs to the SmpB family.

It is found in the cytoplasm. In terms of biological role, required for rescue of stalled ribosomes mediated by trans-translation. Binds to transfer-messenger RNA (tmRNA), required for stable association of tmRNA with ribosomes. tmRNA and SmpB together mimic tRNA shape, replacing the anticodon stem-loop with SmpB. tmRNA is encoded by the ssrA gene; the 2 termini fold to resemble tRNA(Ala) and it encodes a 'tag peptide', a short internal open reading frame. During trans-translation Ala-aminoacylated tmRNA acts like a tRNA, entering the A-site of stalled ribosomes, displacing the stalled mRNA. The ribosome then switches to translate the ORF on the tmRNA; the nascent peptide is terminated with the 'tag peptide' encoded by the tmRNA and targeted for degradation. The ribosome is freed to recommence translation, which seems to be the essential function of trans-translation. In Prochlorococcus marinus (strain MIT 9215), this protein is SsrA-binding protein.